A 156-amino-acid polypeptide reads, in one-letter code: Sensor histidine kinase component HK2 (156 aa).

The Extracellular segment spans residues 1 to 42 (MALVLAAAGAVTVVQFRDAAHEADPDGALRGLTDDITADLVR). A helical transmembrane segment spans residues 43-63 (ELVTILPIVLVIAAVAAYLLS). Residues 64–120 (RAALRPVDRIRAAAQTLTTTPHPDTDAPLPVPPTDDEIAWLATTLNTMLTRLQRALA) enclose the HAMP domain. Residues 64 to 156 (RAALRPVDRI…RCAGPDPPTS (93 aa)) are Cytoplasmic-facing. A Histidine kinase; first part domain is found at 128–156 (DASHELRTPLALLTTELELRCAGPDPPTS). Phosphohistidine; by autocatalysis is present on His131.

Homodimer. Each monomer interacts with HK1 and the receiver domain of TcrA. Phosphorylated by HK1.

It localises to the cell membrane. The catalysed reaction is ATP + protein L-histidine = ADP + protein N-phospho-L-histidine.. Functionally, member of the three-protein two-component system HK1/HK2/TcrA. HK2 transfers its phosphoryl group to TcrA. The sequence is that of Sensor histidine kinase component HK2 from Mycobacterium tuberculosis (strain ATCC 25618 / H37Rv).